The sequence spans 1733 residues: Protein NETWORKED 1D (1733 aa).

One can recognise an NAB domain in the interval 12-92 (YSWWWDSHIS…ERYDHATGVI (81 aa)). 4 coiled-coil regions span residues 195 to 816 (KEIN…RESS), 897 to 931 (LIAE…QIDS), 960 to 1043 (DENS…QKLI), and 1196 to 1386 (ARSA…NDLM). Positions 1456–1476 (LKTSSARRSRRRNGSLRKQNH) are disordered. A compositionally biased stretch (basic residues) spans 1460-1470 (SARRSRRRNGS). Coiled-coil stretches lie at residues 1553-1627 (ANKR…KVQN) and 1653-1686 (SEQA…DRED). The disordered stretch occupies residues 1628–1656 (GFERSDGSKSSMDLDENESSRRRRISEQA).

This sequence belongs to the NET family.

Plant-specific actin binding protein. May be part of a membrane-cytoskeletal adapter complex. This chain is Protein NETWORKED 1D, found in Arabidopsis thaliana (Mouse-ear cress).